The following is a 387-amino-acid chain: Phosphoglycerate kinase (387 aa).

Substrate contacts are provided by residues 21-23 (DLN), R36, 59-62 (HLGR), R113, and R146. ATP contacts are provided by residues K197, E314, and 340 to 343 (GGDT).

Belongs to the phosphoglycerate kinase family. Monomer.

It localises to the cytoplasm. It carries out the reaction (2R)-3-phosphoglycerate + ATP = (2R)-3-phospho-glyceroyl phosphate + ADP. It participates in carbohydrate degradation; glycolysis; pyruvate from D-glyceraldehyde 3-phosphate: step 2/5. This chain is Phosphoglycerate kinase, found in Enterobacter sp. (strain 638).